The following is a 180-amino-acid chain: Regulator of G-protein signaling 8 (180 aa).

Serine 26 carries the post-translational modification Phosphoserine. The RGS domain maps to 56-171 (SFDVLLSHKY…FLRSKMYLDL (116 aa)).

In terms of assembly, interacts with GNAO1. Interacts with GNAI3.

The protein localises to the cell membrane. The protein resides in the membrane. It localises to the perikaryon. It is found in the cell projection. Its subcellular location is the dendrite. The protein localises to the nucleus. In terms of biological role, regulates G protein-coupled receptor signaling cascades, including signaling via muscarinic acetylcholine receptor CHRM2 and dopamine receptor DRD2. Inhibits signal transduction by increasing the GTPase activity of G protein alpha subunits, thereby driving them into their inactive GDP-bound form. Modulates the activity of potassium channels that are activated in response to DRD2 and CHRM2 signaling. The protein is Regulator of G-protein signaling 8 (RGS8) of Homo sapiens (Human).